Here is a 567-residue protein sequence, read N- to C-terminus: Formate--tetrahydrofolate ligase (567 aa).

Position 76-83 (76-83) interacts with ATP; it reads TPAGEGKT.

This sequence belongs to the formate--tetrahydrofolate ligase family.

It catalyses the reaction (6S)-5,6,7,8-tetrahydrofolate + formate + ATP = (6R)-10-formyltetrahydrofolate + ADP + phosphate. It participates in one-carbon metabolism; tetrahydrofolate interconversion. This is Formate--tetrahydrofolate ligase from Sinorhizobium medicae (strain WSM419) (Ensifer medicae).